A 222-amino-acid polypeptide reads, in one-letter code: Phosphoribosylformylglycinamidine synthase subunit PurQ (222 aa).

Residues 3–222 enclose the Glutamine amidotransferase type-1 domain; it reads AAVVVFPGSN…RALSGLLTDA (220 aa). Cys86 functions as the Nucleophile in the catalytic mechanism. Catalysis depends on residues His194 and Glu196.

In terms of assembly, part of the FGAM synthase complex composed of 1 PurL, 1 PurQ and 2 PurS subunits.

It is found in the cytoplasm. The catalysed reaction is N(2)-formyl-N(1)-(5-phospho-beta-D-ribosyl)glycinamide + L-glutamine + ATP + H2O = 2-formamido-N(1)-(5-O-phospho-beta-D-ribosyl)acetamidine + L-glutamate + ADP + phosphate + H(+). It catalyses the reaction L-glutamine + H2O = L-glutamate + NH4(+). Its pathway is purine metabolism; IMP biosynthesis via de novo pathway; 5-amino-1-(5-phospho-D-ribosyl)imidazole from N(2)-formyl-N(1)-(5-phospho-D-ribosyl)glycinamide: step 1/2. Part of the phosphoribosylformylglycinamidine synthase complex involved in the purines biosynthetic pathway. Catalyzes the ATP-dependent conversion of formylglycinamide ribonucleotide (FGAR) and glutamine to yield formylglycinamidine ribonucleotide (FGAM) and glutamate. The FGAM synthase complex is composed of three subunits. PurQ produces an ammonia molecule by converting glutamine to glutamate. PurL transfers the ammonia molecule to FGAR to form FGAM in an ATP-dependent manner. PurS interacts with PurQ and PurL and is thought to assist in the transfer of the ammonia molecule from PurQ to PurL. This Ruegeria sp. (strain TM1040) (Silicibacter sp.) protein is Phosphoribosylformylglycinamidine synthase subunit PurQ.